A 147-amino-acid chain; its full sequence is Cyanate hydratase (147 aa).

Catalysis depends on residues arginine 88, glutamate 91, and serine 114.

Belongs to the cyanase family.

It carries out the reaction cyanate + hydrogencarbonate + 3 H(+) = NH4(+) + 2 CO2. Catalyzes the reaction of cyanate with bicarbonate to produce ammonia and carbon dioxide. The polypeptide is Cyanate hydratase (Methylobacillus flagellatus (strain ATCC 51484 / DSM 6875 / VKM B-1610 / KT)).